The sequence spans 203 residues: A-type ATP synthase subunit E (203 aa).

Belongs to the V-ATPase E subunit family. In terms of assembly, has multiple subunits with at least A(3), B(3), C, D, E, F, H, I and proteolipid K(x).

The protein localises to the cell membrane. Component of the A-type ATP synthase that produces ATP from ADP in the presence of a proton gradient across the membrane. The protein is A-type ATP synthase subunit E of Methanococcus maripaludis (strain C7 / ATCC BAA-1331).